The primary structure comprises 271 residues: Bifunctional protein FolD (271 aa).

NADP(+) contacts are provided by residues 154–156, Thr181, and Ile222; that span reads GRS.

The protein belongs to the tetrahydrofolate dehydrogenase/cyclohydrolase family. As to quaternary structure, homodimer.

The enzyme catalyses (6R)-5,10-methylene-5,6,7,8-tetrahydrofolate + NADP(+) = (6R)-5,10-methenyltetrahydrofolate + NADPH. The catalysed reaction is (6R)-5,10-methenyltetrahydrofolate + H2O = (6R)-10-formyltetrahydrofolate + H(+). Its pathway is one-carbon metabolism; tetrahydrofolate interconversion. Its function is as follows. Catalyzes the oxidation of 5,10-methylenetetrahydrofolate to 5,10-methenyltetrahydrofolate and then the hydrolysis of 5,10-methenyltetrahydrofolate to 10-formyltetrahydrofolate. The protein is Bifunctional protein FolD of Thermosipho melanesiensis (strain DSM 12029 / CIP 104789 / BI429).